A 216-amino-acid polypeptide reads, in one-letter code: MOB kinase activator 1A (216 aa).

At Ser2 the chain carries N-acetylserine. Residues Thr12 and Thr35 each carry the phosphothreonine modification. Thr74 carries the phosphothreonine; by STK3/MST2 modification. 4 residues coordinate Zn(2+): Cys79, Cys84, His161, and His166. Thr181 carries the phosphothreonine modification.

The protein belongs to the MOB1/phocein family. As to quaternary structure, binds STK38 and STK38L. Interacts with LATS1 and LATS2. Forms a tripartite complex with STK38 and STK3/MST2. Phosphorylated by STK3/MST2 and STK4/MST1 and this phosphorylation enhances its binding to LATS1. As to expression, adrenal gland, bone marrow, brain, placenta, prostate, salivary gland, skeletal muscle, testis, thymus, thyroid gland, heart, spinal cord, fetal brain and fetal liver.

Activator of LATS1/2 in the Hippo signaling pathway which plays a pivotal role in organ size control and tumor suppression by restricting proliferation and promoting apoptosis. The core of this pathway is composed of a kinase cascade wherein STK3/MST2 and STK4/MST1, in complex with its regulatory protein SAV1, phosphorylates and activates LATS1/2 in complex with its regulatory protein MOB1, which in turn phosphorylates and inactivates YAP1 oncoprotein and WWTR1/TAZ. Phosphorylation of YAP1 by LATS1/2 inhibits its translocation into the nucleus to regulate cellular genes important for cell proliferation, cell death, and cell migration. Stimulates the kinase activity of STK38 and STK38L. Acts cooperatively with STK3/MST2 to activate STK38. This is MOB kinase activator 1A from Homo sapiens (Human).